The sequence spans 145 residues: D-aminoacyl-tRNA deacylase (145 aa).

The Gly-cisPro motif, important for rejection of L-amino acids signature appears at G137–P138.

The protein belongs to the DTD family. As to quaternary structure, homodimer.

It is found in the cytoplasm. The enzyme catalyses glycyl-tRNA(Ala) + H2O = tRNA(Ala) + glycine + H(+). It carries out the reaction a D-aminoacyl-tRNA + H2O = a tRNA + a D-alpha-amino acid + H(+). Functionally, an aminoacyl-tRNA editing enzyme that deacylates mischarged D-aminoacyl-tRNAs. Also deacylates mischarged glycyl-tRNA(Ala), protecting cells against glycine mischarging by AlaRS. Acts via tRNA-based rather than protein-based catalysis; rejects L-amino acids rather than detecting D-amino acids in the active site. By recycling D-aminoacyl-tRNA to D-amino acids and free tRNA molecules, this enzyme counteracts the toxicity associated with the formation of D-aminoacyl-tRNA entities in vivo and helps enforce protein L-homochirality. This Carboxydothermus hydrogenoformans (strain ATCC BAA-161 / DSM 6008 / Z-2901) protein is D-aminoacyl-tRNA deacylase.